A 91-amino-acid polypeptide reads, in one-letter code: Probable Fe(2+)-trafficking protein (91 aa).

It belongs to the Fe(2+)-trafficking protein family.

Functionally, could be a mediator in iron transactions between iron acquisition and iron-requiring processes, such as synthesis and/or repair of Fe-S clusters in biosynthetic enzymes. The polypeptide is Probable Fe(2+)-trafficking protein (Ralstonia pickettii (strain 12J)).